We begin with the raw amino-acid sequence, 236 residues long: Alpha-acetolactate decarboxylase (236 aa).

This sequence belongs to the alpha-acetolactate decarboxylase family.

The enzyme catalyses (2S)-2-acetolactate + H(+) = (R)-acetoin + CO2. It participates in polyol metabolism; (R,R)-butane-2,3-diol biosynthesis; (R,R)-butane-2,3-diol from pyruvate: step 2/3. Functionally, converts acetolactate into acetoin. This chain is Alpha-acetolactate decarboxylase (aldB), found in Lactococcus lactis subsp. cremoris (strain MG1363).